A 726-amino-acid chain; its full sequence is Catalase-peroxidase (726 aa).

The segment at 1–33 (MSTTDDTHNTLSTGKCPFHQGGHDRSAGAGTAS) is disordered. Residues 105-226 (WHGAGTYRSI…LGATEMGLIY (122 aa)) constitute a cross-link (tryptophyl-tyrosyl-methioninium (Trp-Tyr) (with M-252)). Histidine 106 (proton acceptor) is an active-site residue. Residues 226-252 (YVNPEGPDHSGEPLSAAAAIRATFGNM) constitute a cross-link (tryptophyl-tyrosyl-methioninium (Tyr-Met) (with W-105)). Position 267 (histidine 267) interacts with heme b.

The protein belongs to the peroxidase family. Peroxidase/catalase subfamily. Homodimer or homotetramer. The cofactor is heme b. Post-translationally, formation of the three residue Trp-Tyr-Met cross-link is important for the catalase, but not the peroxidase activity of the enzyme.

The catalysed reaction is H2O2 + AH2 = A + 2 H2O. The enzyme catalyses 2 H2O2 = O2 + 2 H2O. Functionally, bifunctional enzyme with both catalase and broad-spectrum peroxidase activity. This chain is Catalase-peroxidase, found in Salmonella choleraesuis (strain SC-B67).